Here is a 399-residue protein sequence, read N- to C-terminus: Polypyrimidine tract-binding protein homolog 1 (399 aa).

N-acetylserine is present on serine 2. 3 RRM domains span residues 17 to 95 (KVVH…YSNR), 109 to 196 (GNVL…YSAH), and 242 to 322 (SNVL…YSRH). Positions 352-399 (AVSGSAPPAGWQNPQAQSQYSGYGGSPYMYPSSDPNGASPSGQPPYYG) are disordered. Positions 365-384 (PQAQSQYSGYGGSPYMYPSS) are enriched in low complexity.

The protein resides in the nucleus. Its function is as follows. Plays a role in pre-mRNA splicing. Binds to the polypyrimidine tract of introns. May promote the binding of U2 snRNP to pre-mRNA. The sequence is that of Polypyrimidine tract-binding protein homolog 1 (PTB) from Arabidopsis thaliana (Mouse-ear cress).